We begin with the raw amino-acid sequence, 383 residues long: Chaperone protein DnaJ (383 aa).

The J domain occupies 5–70 (DYYKTLGVTQ…KKRTAYDQYG (66 aa)). Residues 137 to 215 (GTIKEIKIPT…CHGNGRIEIS (79 aa)) form a CR-type zinc finger. Zn(2+)-binding residues include cysteine 150, cysteine 153, cysteine 167, cysteine 170, cysteine 189, cysteine 192, cysteine 203, and cysteine 206. 4 CXXCXGXG motif repeats span residues 150–157 (CPTCYGYG), 167–174 (CPTCRGNG), 189–196 (CPQCHGEG), and 203–210 (CRRCHGNG).

It belongs to the DnaJ family. In terms of assembly, homodimer. The cofactor is Zn(2+).

The protein resides in the cytoplasm. Its function is as follows. Participates actively in the response to hyperosmotic and heat shock by preventing the aggregation of stress-denatured proteins and by disaggregating proteins, also in an autonomous, DnaK-independent fashion. Unfolded proteins bind initially to DnaJ; upon interaction with the DnaJ-bound protein, DnaK hydrolyzes its bound ATP, resulting in the formation of a stable complex. GrpE releases ADP from DnaK; ATP binding to DnaK triggers the release of the substrate protein, thus completing the reaction cycle. Several rounds of ATP-dependent interactions between DnaJ, DnaK and GrpE are required for fully efficient folding. Also involved, together with DnaK and GrpE, in the DNA replication of plasmids through activation of initiation proteins. The protein is Chaperone protein DnaJ of Buchnera aphidicola subsp. Baizongia pistaciae (strain Bp).